The primary structure comprises 548 residues: Glucose-6-phosphate isomerase (548 aa).

Catalysis depends on E355, which acts as the Proton donor. Active-site residues include H386 and K514.

It belongs to the GPI family.

The protein resides in the cytoplasm. It catalyses the reaction alpha-D-glucose 6-phosphate = beta-D-fructose 6-phosphate. Its pathway is carbohydrate biosynthesis; gluconeogenesis. It participates in carbohydrate degradation; glycolysis; D-glyceraldehyde 3-phosphate and glycerone phosphate from D-glucose: step 2/4. Functionally, catalyzes the reversible isomerization of glucose-6-phosphate to fructose-6-phosphate. This chain is Glucose-6-phosphate isomerase, found in Proteus mirabilis (strain HI4320).